Here is a 98-residue protein sequence, read N- to C-terminus: Glutaredoxin 1 (98 aa).

Residues M1–D98 form the Glutaredoxin domain. A disulfide bridge links C17 with C20.

It belongs to the glutaredoxin family. As to quaternary structure, monomer.

The protein localises to the cytoplasm. Functionally, has a glutathione-disulfide oxidoreductase activity in the presence of NADPH and glutathione reductase. Reduces low molecular weight disulfides and proteins. In Rickettsia bellii (strain RML369-C), this protein is Glutaredoxin 1 (grxC1).